The sequence spans 463 residues: Major capsid protein (463 aa).

The propeptide occupies 1–24 (MTIEKNLSDVQQKYADQFQEDVVK).

Its subcellular location is the virion. Its function is as follows. Assembles to form an icosahedral capsid. This chain is Major capsid protein, found in Staphylococcus phage K.